The chain runs to 88 residues: Conotoxin tx9a (88 aa).

Positions 1 to 27 are cleaved as a signal peptide; sequence MHLSLARSAVLMLLLLFALGNFVVVQS. The propeptide occupies 28 to 58; that stretch reads GQITRDVDNGQLTDNRRNLQSKWKPVSLYMS. 3 disulfide bridges follow: Cys62–Cys76, Cys66–Cys78, and Cys72–Cys83. A 4-carboxyglutamate; partial mark is found at Glu68 and Glu73. At Asn87 the chain carries Asparagine amide.

Post-translationally, exists in 4 different forms, depending on gamma-carboxyglutamations. Tx9a-EE does not contain gamma-carboxyglutamate, tx9a-E/gamma has one gamma-carboxyglutamate at position 73, tx9a-gamma/E has one gamma-carboxyglutamate at position 68, and tx9a-agmma/gamma has two gamma-carboxyglutamates at positions 68 and 73. Expressed by the venom duct. All different gamma-carboxyalted forms are mostly present in part 2, part 3 and part 4 of the venom duct. They are also found in part 1 (proximal part near the venom bulb) and part 5, but in lower quantity.

Its subcellular location is the secreted. Neurotoxin. In vivo, intracranial injection into mice of 10 pmol/g of the peptide induces running in circles and hyperactivity. At higher doses (50 pmol/g), the mice exhibit running and climbing symptoms for close to one hour. Between 130 and 150 pmol/g, characteristic 'spasmodic' symptomatology is elicited. A hand clap would make mice jump high and start running rapidly. When exposed to a loud hand clap, or if the cage cover were dropped, the mice lose motor control and exhibit seizure-like symptoms from which they eventually recover. At the highest doses tested (over 250 pmol/g), after the characteristic spasmodic symptomatology, lethality occurs. Injection of a similar dose range intramuscularly into Siamese fighting fish elicited no unusual symptomatology. In Conus textile (Cloth-of-gold cone), this protein is Conotoxin tx9a.